A 151-amino-acid polypeptide reads, in one-letter code: Large ribosomal subunit protein bL9 (151 aa).

It belongs to the bacterial ribosomal protein bL9 family.

In terms of biological role, binds to the 23S rRNA. The polypeptide is Large ribosomal subunit protein bL9 (Mycolicibacterium smegmatis (strain ATCC 700084 / mc(2)155) (Mycobacterium smegmatis)).